Consider the following 307-residue polypeptide: Porphobilinogen deaminase (307 aa).

Position 241 is an S-(dipyrrolylmethanemethyl)cysteine (Cys-241).

It belongs to the HMBS family. As to quaternary structure, monomer. It depends on dipyrromethane as a cofactor.

It catalyses the reaction 4 porphobilinogen + H2O = hydroxymethylbilane + 4 NH4(+). Its pathway is porphyrin-containing compound metabolism; protoporphyrin-IX biosynthesis; coproporphyrinogen-III from 5-aminolevulinate: step 2/4. Functionally, tetrapolymerization of the monopyrrole PBG into the hydroxymethylbilane pre-uroporphyrinogen in several discrete steps. This chain is Porphobilinogen deaminase, found in Macrococcus caseolyticus (strain JCSC5402) (Macrococcoides caseolyticum).